The sequence spans 415 residues: Methylthioribose-1-phosphate isomerase (415 aa).

Asp-284 serves as the catalytic Proton donor.

The protein belongs to the eIF-2B alpha/beta/delta subunits family. MtnA subfamily.

The protein localises to the cytoplasm. It is found in the nucleus. It carries out the reaction 5-(methylsulfanyl)-alpha-D-ribose 1-phosphate = 5-(methylsulfanyl)-D-ribulose 1-phosphate. The protein operates within amino-acid biosynthesis; L-methionine biosynthesis via salvage pathway; L-methionine from S-methyl-5-thio-alpha-D-ribose 1-phosphate: step 1/6. In terms of biological role, catalyzes the interconversion of methylthioribose-1-phosphate (MTR-1-P) into methylthioribulose-1-phosphate (MTRu-1-P). This is Methylthioribose-1-phosphate isomerase from Vanderwaltozyma polyspora (strain ATCC 22028 / DSM 70294 / BCRC 21397 / CBS 2163 / NBRC 10782 / NRRL Y-8283 / UCD 57-17) (Kluyveromyces polysporus).